A 292-amino-acid polypeptide reads, in one-letter code: Elongation factor Ts (292 aa).

The involved in Mg(2+) ion dislocation from EF-Tu stretch occupies residues 80-83 (TDSV).

Belongs to the EF-Ts family.

The protein resides in the cytoplasm. In terms of biological role, associates with the EF-Tu.GDP complex and induces the exchange of GDP to GTP. It remains bound to the aminoacyl-tRNA.EF-Tu.GTP complex up to the GTP hydrolysis stage on the ribosome. The polypeptide is Elongation factor Ts (Lactiplantibacillus plantarum (strain ATCC BAA-793 / NCIMB 8826 / WCFS1) (Lactobacillus plantarum)).